Here is an 87-residue protein sequence, read N- to C-terminus: Small ribosomal subunit protein uS17 (87 aa).

Belongs to the universal ribosomal protein uS17 family. In terms of assembly, part of the 30S ribosomal subunit.

One of the primary rRNA binding proteins, it binds specifically to the 5'-end of 16S ribosomal RNA. This Thioalkalivibrio sulfidiphilus (strain HL-EbGR7) protein is Small ribosomal subunit protein uS17.